Here is a 1058-residue protein sequence, read N- to C-terminus: Lon protease homolog, mitochondrial (1058 aa).

Residues 1–47 (MLTRIRNAGVGGNAARRVRLLAGYTGARMAHAAALNSTTGAGGAARA) constitute a mitochondrion transit peptide. Residues 72–151 (GGQCILKQDR…RSNPPSEGEV (80 aa)) are disordered. Composition is skewed to basic and acidic residues over residues 78-97 (KQDREPDQSDDKKVPPRAEE) and 106-118 (DEEAERQPREEQA). Positions 129 to 142 (GSGGSASSAGGGGR) are enriched in gly residues. Positions 158–412 (LMVLPMSNRP…KALVFIKKEV (255 aa)) constitute a Lon N-terminal domain. Residue 564 to 571 (GPPGVGKT) participates in ATP binding. The disordered stretch occupies residues 778–814 (TPKSAPAETNIEPENGKPDASAKPLTNNLPAPEPLNI). The region spanning 844–1030 (KTPAGVVMGL…DDVFNVLFGS (187 aa)) is the Lon proteolytic domain. Catalysis depends on residues Ser936 and Lys979.

Belongs to the peptidase S16 family. Homohexamer or homoheptamer. Organized in a ring with a central cavity.

It localises to the mitochondrion matrix. It catalyses the reaction Hydrolysis of proteins in presence of ATP.. Functionally, ATP-dependent serine protease that mediates the selective degradation of misfolded, unassembled or oxidatively damaged polypeptides as well as certain short-lived regulatory proteins in the mitochondrial matrix. May also have a chaperone function in the assembly of inner membrane protein complexes. Participates in the regulation of mitochondrial gene expression and in the maintenance of the integrity of the mitochondrial genome. Binds to mitochondrial DNA in a site-specific manner. In Eremothecium gossypii (strain ATCC 10895 / CBS 109.51 / FGSC 9923 / NRRL Y-1056) (Yeast), this protein is Lon protease homolog, mitochondrial.